Consider the following 220-residue polypeptide: MNKIKSMLSVYFIAGSQDCRHLPGEPTENLLTILQRALEAGITCFQFREKGEQSLACDLQLKRRLALKCLQLCRQFQVPFIVNDDVELALSIQADGIHVGQKDTAVETILRNTRNKPIIGLSINTLAQALANKDRQDIDYFGVGPIFPTNSKADHSPLVGMNFIRQIRQLGIDKPCVAIGGIKEESAAILRRLGADGVAVISAISHSVNIANTVKTLAQK.

4-amino-2-methyl-5-(diphosphooxymethyl)pyrimidine contacts are provided by residues 46–50 and Asn83; that span reads QFREK. Mg(2+)-binding residues include Asp84 and Asp103. Residue Ser122 participates in 4-amino-2-methyl-5-(diphosphooxymethyl)pyrimidine binding. Position 149–151 (149–151) interacts with 2-[(2R,5Z)-2-carboxy-4-methylthiazol-5(2H)-ylidene]ethyl phosphate; sequence TNS. A 4-amino-2-methyl-5-(diphosphooxymethyl)pyrimidine-binding site is contributed by Lys152. Residues Gly181 and 201–202 contribute to the 2-[(2R,5Z)-2-carboxy-4-methylthiazol-5(2H)-ylidene]ethyl phosphate site; that span reads IS.

It belongs to the thiamine-phosphate synthase family. The cofactor is Mg(2+).

The enzyme catalyses 2-[(2R,5Z)-2-carboxy-4-methylthiazol-5(2H)-ylidene]ethyl phosphate + 4-amino-2-methyl-5-(diphosphooxymethyl)pyrimidine + 2 H(+) = thiamine phosphate + CO2 + diphosphate. The catalysed reaction is 2-(2-carboxy-4-methylthiazol-5-yl)ethyl phosphate + 4-amino-2-methyl-5-(diphosphooxymethyl)pyrimidine + 2 H(+) = thiamine phosphate + CO2 + diphosphate. It carries out the reaction 4-methyl-5-(2-phosphooxyethyl)-thiazole + 4-amino-2-methyl-5-(diphosphooxymethyl)pyrimidine + H(+) = thiamine phosphate + diphosphate. It functions in the pathway cofactor biosynthesis; thiamine diphosphate biosynthesis; thiamine phosphate from 4-amino-2-methyl-5-diphosphomethylpyrimidine and 4-methyl-5-(2-phosphoethyl)-thiazole: step 1/1. Functionally, condenses 4-methyl-5-(beta-hydroxyethyl)thiazole monophosphate (THZ-P) and 2-methyl-4-amino-5-hydroxymethyl pyrimidine pyrophosphate (HMP-PP) to form thiamine monophosphate (TMP). This Mannheimia succiniciproducens (strain KCTC 0769BP / MBEL55E) protein is Thiamine-phosphate synthase.